The sequence spans 293 residues: 4-hydroxy-tetrahydrodipicolinate synthase (293 aa).

T45 contacts pyruvate. The active-site Proton donor/acceptor is Y133. The active-site Schiff-base intermediate with substrate is the K161. Position 203 (I203) interacts with pyruvate.

It belongs to the DapA family. As to quaternary structure, homotetramer; dimer of dimers.

It is found in the cytoplasm. It catalyses the reaction L-aspartate 4-semialdehyde + pyruvate = (2S,4S)-4-hydroxy-2,3,4,5-tetrahydrodipicolinate + H2O + H(+). The protein operates within amino-acid biosynthesis; L-lysine biosynthesis via DAP pathway; (S)-tetrahydrodipicolinate from L-aspartate: step 3/4. Its function is as follows. Catalyzes the condensation of (S)-aspartate-beta-semialdehyde [(S)-ASA] and pyruvate to 4-hydroxy-tetrahydrodipicolinate (HTPA). This Aliivibrio fischeri (strain ATCC 700601 / ES114) (Vibrio fischeri) protein is 4-hydroxy-tetrahydrodipicolinate synthase.